The primary structure comprises 284 residues: D-tagatose-1,6-bisphosphate aldolase subunit GatY (284 aa).

Residue D82 is the Proton donor of the active site. Residues H83 and H180 each coordinate Zn(2+). A dihydroxyacetone phosphate-binding site is contributed by G181. H208 serves as a coordination point for Zn(2+). Dihydroxyacetone phosphate-binding positions include 209-211 (GAS) and 230-233 (NVAT).

It belongs to the class II fructose-bisphosphate aldolase family. TagBP aldolase GatY subfamily. Forms a complex with GatZ. It depends on Zn(2+) as a cofactor.

The enzyme catalyses D-tagatofuranose 1,6-bisphosphate = D-glyceraldehyde 3-phosphate + dihydroxyacetone phosphate. Its pathway is carbohydrate metabolism; D-tagatose 6-phosphate degradation; D-glyceraldehyde 3-phosphate and glycerone phosphate from D-tagatose 6-phosphate: step 2/2. In terms of biological role, catalytic subunit of the tagatose-1,6-bisphosphate aldolase GatYZ, which catalyzes the reversible aldol condensation of dihydroxyacetone phosphate (DHAP or glycerone-phosphate) with glyceraldehyde 3-phosphate (G3P) to produce tagatose 1,6-bisphosphate (TBP). Requires GatZ subunit for full activity and stability. Is involved in the catabolism of galactitol. The polypeptide is D-tagatose-1,6-bisphosphate aldolase subunit GatY (Shigella sonnei (strain Ss046)).